The following is a 299-amino-acid chain: Phosphoribosylaminoimidazole-succinocarboxamide synthase (299 aa).

It belongs to the SAICAR synthetase family.

It catalyses the reaction 5-amino-1-(5-phospho-D-ribosyl)imidazole-4-carboxylate + L-aspartate + ATP = (2S)-2-[5-amino-1-(5-phospho-beta-D-ribosyl)imidazole-4-carboxamido]succinate + ADP + phosphate + 2 H(+). Its pathway is purine metabolism; IMP biosynthesis via de novo pathway; 5-amino-1-(5-phospho-D-ribosyl)imidazole-4-carboxamide from 5-amino-1-(5-phospho-D-ribosyl)imidazole-4-carboxylate: step 1/2. This chain is Phosphoribosylaminoimidazole-succinocarboxamide synthase, found in Maridesulfovibrio salexigens (strain ATCC 14822 / DSM 2638 / NCIMB 8403 / VKM B-1763) (Desulfovibrio salexigens).